The primary structure comprises 176 residues: ATP-dependent protease subunit HslV (176 aa).

Threonine 2 is a catalytic residue. 3 residues coordinate Na(+): glycine 157, cysteine 160, and threonine 163.

Belongs to the peptidase T1B family. HslV subfamily. As to quaternary structure, a double ring-shaped homohexamer of HslV is capped on each side by a ring-shaped HslU homohexamer. The assembly of the HslU/HslV complex is dependent on binding of ATP.

The protein localises to the cytoplasm. The enzyme catalyses ATP-dependent cleavage of peptide bonds with broad specificity.. Allosterically activated by HslU binding. Functionally, protease subunit of a proteasome-like degradation complex believed to be a general protein degrading machinery. This is ATP-dependent protease subunit HslV from Enterobacter sp. (strain 638).